Here is a 612-residue protein sequence, read N- to C-terminus: Kelch-like protein 40a (612 aa).

The BTB domain maps to 34–101 (VDCILKIKDK…IYTSDINLTE (68 aa)). Residues 136 to 238 (CLAIFRLGLL…PTSYFKEKVE (103 aa)) enclose the BACK domain. A compositionally biased stretch (basic residues) spans 266–275 (RVKRSSHRKE). The disordered stretch occupies residues 266-290 (RVKRSSHRKEGKSAEFESDDDDEDG). Acidic residues predominate over residues 281 to 290 (FESDDDDEDG). 5 Kelch repeats span residues 350-402 (QIFV…EAEN), 403-452 (SIYV…SHKG), 453-500 (LVYV…VHKN), 502-547 (IYVV…ELGG), and 549-604 (LYAI…GVRL).

Belongs to the KLHL40 family. Component of the BCR(KLHL40) E3 ubiquitin ligase complex. As to expression, expressed in skeletal muscle and heart. Detected, although at much lower levels, in brain, eye and fin.

The protein resides in the cytoplasm. Its subcellular location is the myofibril. It localises to the sarcomere. It is found in the a band. The protein localises to the i band. Functionally, substrate-specific adapter of a BCR (BTB-CUL3-RBX1) E3 ubiquitin ligase complex. Required for skeletal muscle development. The polypeptide is Kelch-like protein 40a (klhl40a) (Danio rerio (Zebrafish)).